A 232-amino-acid polypeptide reads, in one-letter code: 5'-methylthioadenosine/S-adenosylhomocysteine nucleosidase (232 aa).

E12 serves as the catalytic Proton acceptor. Substrate-binding positions include G78, I152, and 173–174; that span reads ME. Residue D197 is the Proton donor of the active site.

Belongs to the PNP/UDP phosphorylase family. MtnN subfamily. Homodimer.

It catalyses the reaction S-adenosyl-L-homocysteine + H2O = S-(5-deoxy-D-ribos-5-yl)-L-homocysteine + adenine. The enzyme catalyses S-methyl-5'-thioadenosine + H2O = 5-(methylsulfanyl)-D-ribose + adenine. The catalysed reaction is 5'-deoxyadenosine + H2O = 5-deoxy-D-ribose + adenine. It participates in amino-acid biosynthesis; L-methionine biosynthesis via salvage pathway; S-methyl-5-thio-alpha-D-ribose 1-phosphate from S-methyl-5'-thioadenosine (hydrolase route): step 1/2. Functionally, catalyzes the irreversible cleavage of the glycosidic bond in both 5'-methylthioadenosine (MTA) and S-adenosylhomocysteine (SAH/AdoHcy) to adenine and the corresponding thioribose, 5'-methylthioribose and S-ribosylhomocysteine, respectively. Also cleaves 5'-deoxyadenosine, a toxic by-product of radical S-adenosylmethionine (SAM) enzymes, into 5-deoxyribose and adenine. Thus, is required for in vivo function of the radical SAM enzymes biotin synthase and lipoic acid synthase, that are inhibited by 5'-deoxyadenosine accumulation. The polypeptide is 5'-methylthioadenosine/S-adenosylhomocysteine nucleosidase (Salmonella arizonae (strain ATCC BAA-731 / CDC346-86 / RSK2980)).